The sequence spans 1932 residues: MSQQDSQRWLPTDRLIYGVLVKSFLPLQRYPELVYENSNYANVYVGAEVYVFEESVDKKWCRAYQCLRPFPEEFISNMNSANDVLPDVKPKVVIFPRKYVHFEAEKAVSTMPFFKAPSAEDFKPLISKECESRSFCDSLYVSSTDDISTGKPRKTPRPPFPFFRYQKRSFKDEMGPILSLISSHVYSMYSIGEFSIYRKMIKLYYDLDTIRFRLSMNLTTEAEKINLIRAATSLRTKIAKFLSSTYRKNKLIANSTPRNPDPYGFEGIFARDIDTGELLSYEIDKLRTLVSSSMLCGLTNNFPTVPVVESDDESSSNGLFGTVRSSILVNLKDLAWDPSISDPKYQDLSICVYLRTKDEVLTESFTMTKSSNMESALDEIPAMLFKNILETIVHKNKVYLVVVLKETIAITTETAPEISSYNISTEESSSHSPFSPFNSSTENKIDHVKKGLAAGVINISPVFKFYNGLSVANKAQRFNLYLYSSDSSDSQNFNSSKDADLGWGGLINKIIKDSSEGVSVNPRAVSLSVTVKEIIGKQEAEKVLSTSLVPIRSIPTYFYDTMFSQAERIYLNLGRVSLYGLPAADTNIENVTVQISCRNKAVKFCKNKLEERSGDWKFVSVRPNESIGESIRIEGVENMNEDETLRVLVYLNGFLMAKSNIHIKKKNEIIEYRKGTVFQIMSSKSVPLIHLELEASYFGRRYNINPAITNFLVLQTKNVEFDQQLKEHYSVTLKQLNNVSFKDLLKHFDTILAHYLLLLESVNEATDKKGPSSSLPNIVFSEFVKFLNLMLTHQENSRYWFNRLYKKVMSKELECPNVAPILIKHMTTIFDRSHSSWTRTGTAICRTILYIIVLAIGSSHSDEMPNFSHFFRSLHKFLMLADEPIMADQILLIESIPSMLETMTNHCKVEDLVRFAIGLFECCQEKEMNQKMYSRPLSVREEEYLNTKFNCLLKLINKKVLQNYLTNTESVDKLRLQFLSKTLEWLLTPYTPGDDKCFHVESLRLVNSVFITIIEDYKFDMLQRNLIRLLPYLCKSFVHLRRYCKKARLMRPRRVFTMLFPREIPCNYIPVDSIVNDEVVVEVLLELAIIICEITKIASSRFPSYQSFSEIINLCDKDTLFQSNFYSRQITNENVYTITKTVFLFFKQDWFPGMKWLGVSALLGRSSLILLSLCKDYIIENNSPSPSKESEKRVDMRLWAEYVKVILLVSNHKSASLTKLAITPRKAVYLISGDLKKISAYILNECWDALATGHYNITYAKKYGLGALSDCQFELFVHNQFLIREIFIFAFHRHIDATRICCKILWGLGLNFWRIFGSLQPAVNACIPELFSAYQIGKLRLNDYELERFVSCLFFMMHVPDSDTFFPACMDFLRDLLGFLHIVNEIYKIPNQEEFDDDRTARHIEMFEYLLEANRPELFHKMIYDLFIHFIQKKDFVQAALSLELLAGTYAWDSNDTLEAISFPPLPEQSSFERKEYLLKESARNFSRGQKPEKALAVYKDLIKAYDEINYDLNGLAFVHDQIAGIYTRLQSIDRLVPTYFKVSFMGFGFPKSLRNKSFVFEGLPFEHITSMHDRLLRSYHGSNIVHSQEEVDMLLMNPPMGKYIHVASVEPCLSISDNYNSSDKKSSINNKVRMYIENRDLRTFSNSRRLPGAKGVTDLWVEEYTYHTMNTFPTLMNRSEIVKVTKSKLSPLENAIRSLQVKIQELYGLENMCNKTLKDHGDVNDLFTELSTNITGTISAPVNGGISQYKAFLEPSTSKQFSTDDLGRLTLAFDELVAVLGRCLTLHAELLPSKDLKPSHDLLVRLFEENFAEEIERYSRTLSEANRSRNNMITARIISHKNPNKKASFSGRDHHTSGSNHSQFVLEHSDSFGPNSLLFGKYLTRTLSHSSTTSSLDKSGIVSGTSSTFLAGSQPNTNTDSQHKHDYSHSG.

In terms of domain architecture, DOCKER spans 1410–1824; sequence LLEANRPELF…EIERYSRTLS (415 aa). The span at 1908-1921 shows a compositional bias: polar residues; it reads STFLAGSQPNTNTD. Residues 1908-1932 form a disordered region; that stretch reads STFLAGSQPNTNTDSQHKHDYSHSG. Residues 1922–1932 are compositionally biased toward basic and acidic residues; it reads SQHKHDYSHSG.

It belongs to the DOCK family. Forms an active heterodimer with LMO1.

The protein localises to the cytoplasm. It localises to the mitochondrion. Functionally, forms a transiant heterodimeric complex with LMO1, that acts as a guanine nucleotide exchange factor exchange factor (GEF) for the small GTPase RHO5. DCK1, LMO1 and RHO5 relocate to mitochondria upon oxidative stress and trigger cell death. The DCK1/LMO1/RHO5 signaling module mediates mitochondrial turnover under nitrogen starvation conditions via mitophagy. The DCK1/LMO1/RHO5 signaling module plays also a function in cell wall integrity signaling. The sequence is that of DOCK-like protein 1 from Saccharomyces cerevisiae (strain ATCC 204508 / S288c) (Baker's yeast).